Consider the following 559-residue polypeptide: Actin-binding protein WASF1 (559 aa).

3 disordered regions span residues 169-202 (TEDKRKEKRKQKQKNLDRPHEPEKVPRAPHDRRR), 307-400 (RPQS…SPPV), and 412-492 (VHPL…STLP). Residues 182–202 (KNLDRPHEPEKVPRAPHDRRR) show a composition bias toward basic and acidic residues. The span at 322–332 (PTPPPPPPPLP) shows a compositional bias: pro residues. Residues 333-346 (SALSTSSLRASMTS) show a composition bias toward low complexity. Residue Arg341 is modified to Asymmetric dimethylarginine; alternate. Residue Arg341 is modified to Omega-N-methylarginine; alternate. Composition is skewed to pro residues over residues 347–374 (TPPPPVPPPPPPPAPALQAPAVPPPPAP), 384–399 (PAPPPIAPPLVQPSPP), 423–437 (LPPPPPPPPLPPPGI), and 458–477 (TPSPAPGPHAPLMPPSPPSQ). Ser489 carries the phosphoserine modification. A WH2 domain is found at 497-514 (ARSVLLEAIRKGIQLRKV).

Belongs to the SCAR/WAVE family. As to quaternary structure, component of the WAVE1 complex composed of ABI2, CYFIP1 or CYFIP2, BRK1, NCKAP1 and WASF1/WAVE1. Within the complex, a heterodimer containing NCKAP1 and CYFIP1 interacts with a heterotrimer formed by WAVE1, ABI2 and BRK1. CYFIP2 binds to activated RAC1 which causes the complex to dissociate, releasing activated WASF1. The complex can also be activated by NCK1. Binds actin and the Arp2/3 complex. Interacts with BAIAP2. Interacts with SHANK3; the interaction mediates the association of SHANK3 with the WAVE1 complex. Interacts with ABI1 (via N-terminus). Interacts with SORBS2; this interaction greatly enhances phosphorylation by ABL1 and dephosphorylation by PTPN12 and might mediate partial to focal adhesion sites. In terms of tissue distribution, expressed in hippocampal neurons (at protein level).

The protein localises to the cytoplasm. The protein resides in the cytoskeleton. It is found in the synapse. It localises to the cell junction. Its subcellular location is the focal adhesion. Downstream effector molecule involved in the transmission of signals from tyrosine kinase receptors and small GTPases to the actin cytoskeleton. Promotes formation of actin filaments. Part of the WAVE complex that regulates lamellipodia formation. The WAVE complex regulates actin filament reorganization via its interaction with the Arp2/3 complex. As component of the WAVE1 complex, required for BDNF-NTRK2 endocytic trafficking and signaling from early endosomes. Also involved in the regulation of mitochondrial dynamics. This chain is Actin-binding protein WASF1 (Wasf1), found in Rattus norvegicus (Rat).